The primary structure comprises 666 residues: Probable potassium transport system protein Kup (666 aa).

A run of 12 helical transmembrane segments spans residues 16–36 (GFIIALGIVYGDIGTSPLYTM), 58–78 (ISLIIWTLTLITTIKYVLIAL), 100–120 (PWLIIPAMIGGATLLSDGALT), 141–161 (IYQNQTNVIITTLVILIVLFG), 165–185 (FGTGFIGKIFGPVMFIWFSFL), 221–241 (IFILGSIFLATTGAEALYSDL), 253–273 (WPFVKMCIVLSYCGQAAWILA), 292–312 (LTVYVVILATLAAIIASQALI), 343–363 (LYIPVINWILFAVTSCTVLYF), 373–393 (YGLAITITMLMTTILLNYYLI), 399–419 (PFLAHLVMTFFALVEFIFFWA), and 424–444 (FMHGGYVVVILALAIVFVMFI).

This sequence belongs to the HAK/KUP transporter (TC 2.A.72) family.

The protein resides in the cell membrane. It catalyses the reaction K(+)(in) + H(+)(in) = K(+)(out) + H(+)(out). In terms of biological role, transport of potassium into the cell. Likely operates as a K(+):H(+) symporter. In Streptococcus pyogenes serotype M18 (strain MGAS8232), this protein is Probable potassium transport system protein Kup.